We begin with the raw amino-acid sequence, 304 residues long: N-acetyl-D-glucosamine kinase (304 aa).

Residues 4 to 11 (GFDMGGTK) and 133 to 140 (GVGGGLIV) contribute to the ATP site. Histidine 157, cysteine 177, cysteine 179, and cysteine 184 together coordinate Zn(2+).

The protein belongs to the ROK (NagC/XylR) family. NagK subfamily.

It catalyses the reaction N-acetyl-D-glucosamine + ATP = N-acetyl-D-glucosamine 6-phosphate + ADP + H(+). It functions in the pathway cell wall biogenesis; peptidoglycan recycling. In terms of biological role, catalyzes the phosphorylation of N-acetyl-D-glucosamine (GlcNAc) derived from cell-wall degradation, yielding GlcNAc-6-P. The chain is N-acetyl-D-glucosamine kinase from Yersinia pseudotuberculosis serotype O:1b (strain IP 31758).